The sequence spans 410 residues: Cell death protein hid (410 aa).

Disordered regions lie at residues 1-88 (MAVP…MQSP), 126-207 (FTGG…HMMP), 230-301 (NTAS…EATW), and 319-386 (QEFN…KKKP). 2 stretches are compositionally biased toward low complexity: residues 13 to 27 (DDVASSSSGASGNSS) and 35 to 70 (SSASSSVSSSGVSSASASSASSSSSASSDGASSAAS). The segment covering 71 to 88 (QSPNTTTSSATQTPMQSP) has biased composition (polar residues). The segment covering 134 to 145 (PHGHPNPNSNPH) has biased composition (low complexity). Residues 149-159 (PRTSVSFSSGE) are compositionally biased toward polar residues. Residues 170-189 (QPHPSYPAPSTPQPMPPQSA) show a composition bias toward pro residues. Over residues 230–242 (NTASAGTSSSSAA) the composition is skewed to low complexity. Basic and acidic residues predominate over residues 292 to 301 (EYQSDHEATW). Position 295 is a phosphoserine (serine 295). The span at 343–358 (PVCHTDSQPGGTSQAE) shows a compositional bias: polar residues. A compositionally biased stretch (basic and acidic residues) spans 371 to 380 (QVERERQKAK).

The protein to D.melanogaster grim and rpr. In terms of assembly, interacts with Diap2 (via BIR2 and BIR3 domains).

Its function is as follows. Activator of apoptosis, with grim and rpr, that acts on the effector Dredd. Seems to act genetically upstream of baculoviral anti-apoptotic p35. Blocks Diap2 from binding and inactivating the effector caspase Drice. Might regulate apoptosis downstream of Clbn/NEMF. In Drosophila melanogaster (Fruit fly), this protein is Cell death protein hid (hid).